The primary structure comprises 197 residues: Putative NADH dehydrogenase/NAD(P)H nitroreductase Plav_3612 (197 aa).

Belongs to the nitroreductase family. HadB/RutE subfamily. It depends on FMN as a cofactor.

The chain is Putative NADH dehydrogenase/NAD(P)H nitroreductase Plav_3612 from Parvibaculum lavamentivorans (strain DS-1 / DSM 13023 / NCIMB 13966).